The primary structure comprises 341 residues: MSVYTTAQLLAVNEKKFKFDPLFLRIFFRETYPFSTEKVYLSQIPGLVNMALYVSPIVSGKVIRSRGGSTSEFTPGYVKPKHEVNPLMTLRRLPDEDPQNLADPVYRRRRIILQNMKDEELAIAQVEEKQAVAAVLSGKYTMTGEAFEPVEVDMGRSAGNNIVQAGAAAWSSRDKETYDPTDDIEAYALNASGVVNIIVFDPKGWALFRSFKAVKEKLDTRRGSNSELETALKDLGKAVSYKGMYGDVAIVVYSGQYIENDVKKNYLPDLTMVLGNTQARGLRTYGCILDADAQREGINASTRYPKNWVQTGDPAREFTMIQSAPLMLLADPDEFVSVKLA.

The stretch at 109 to 129 forms a coiled coil; sequence RRIILQNMKDEELAIAQVEEK.

It belongs to the lambda phage major capsid protein family. In terms of assembly, homomultimer.

The protein resides in the virion. It is found in the host cytoplasm. Functionally, assembles to form an icosahedral capsid with a T=7 symmetry. The icosahedral capsid is about 60 nm in diameter and composed of 415 major capsid proteins. The assembly is primed by the interaction between capsid assembly protease and portal dodecamer, and major capsid proteins assemble cooperatively to form the procapsid with the help of capsid scaffolding protein. Major capsid protein forms hexons and pentons of the icosahedron. Viral genomic DNA is packaged into the procapsid through the portal vertex. The packaging triggers a dramatic reconfiguration of the capsid shell. This is Major capsid protein from Escherichia coli (Bacteriophage N15).